A 3744-amino-acid chain; its full sequence is SAGA complex/NuA4 acetyltransferase complex subunit TRA1 (3744 aa).

N-acetylserine is present on S2. 4 HEAT repeats span residues 2–40, 46–92, 94–131, and 135–172; these read SLTE…LLNS, FFLQ…NQTF, PYAM…SFKS, and DKLD…DLDS. The tract at residues 2–2598 is HEAT; the sequence is SLTEQIEQFA…KPYHTRQISS (2597 aa). S172 is subject to Phosphoserine. Basic and acidic residues predominate over residues 185-195; the sequence is FSKNDEEKDFP. The disordered stretch occupies residues 185 to 212; it reads FSKNDEEKDFPSKQSSTEPRFENSTSSN. The segment covering 196 to 212 has biased composition (polar residues); sequence SKQSSTEPRFENSTSSN. HEAT repeat units follow at residues 247 to 284, 319 to 357, and 437 to 477; these read PEFT…ISTE, QDYV…ILST, and KLLL…RFKT. Over residues 522 to 539 the composition is skewed to basic and acidic residues; the sequence is LEPSDDDHLMPQPKKEDI. The segment at 522–546 is disordered; the sequence is LEPSDDDHLMPQPKKEDINDSPDVE. The residue at position 542 (S542) is a Phosphoserine. HEAT repeat units lie at residues 588–628, 734–771, 779–821, 829–867, 870–910, 919–958, 1074–1112, 1188–1225, 1283–1320, 1369–1408, 1435–1472, 1476–1512, 1693–1734, 1739–1776, 1918–1955, 2115–2155, 2182–2219, 2230–2267, 2269–2307, and 2536–2573; these read RTLM…VFSY, PNFA…LSFM, INEV…SIGG, RSIK…TVPV, SVLA…NLTA, PVID…RNRQ, NQEN…HFCL, SFIP…NVKS, KVLE…LTGI, TFNE…SEQL, NIRI…ENSK, ELLQ…LLIA, LKLK…RFTE, DQNP…SSNK, FPIK…VLHE, ELGL…LDSE, ENLP…AIKA, SPGK…FMNF, DNIV…ARIT, and IISS…SIPK. Residues 2599 to 3744 are head; it reads RTNVINMLLD…RTDVNFMPWF (1146 aa). Residues 2622 to 3177 form the FAT domain; the sequence is LVKYLAISYN…HFQLRTTKED (556 aa). The region spanning 3374–3732 is the PI3K/PI4K catalytic domain; it reads FLPTVDFVRG…CIGSAVSPRN (359 aa). Positions 3380–3386 are G-loop; the sequence is FVRGTHS. Positions 3563–3571 are catalytic loop; that stretch reads MINNRTPHK. Positions 3600-3625 are activation loop; sequence LKNHDLSLPPDSPIFHNNEPVPFRLT. One can recognise an FATC domain in the interval 3712 to 3744; that stretch reads TPTVTTQFILDCIGSAVSPRNLARTDVNFMPWF.

It belongs to the PI3/PI4-kinase family. TRA1 subfamily. In terms of assembly, component of the 1.8 MDa SAGA (Spt-Ada-Gcn5 acetyltransferase) complex, which is composed of 19 subunits TRA1, SPT7, TAF5, NGG1/ADA3, SGF73, SPT20/ADA5, SPT8, TAF12, TAF6, HFI1/ADA1, UBP8, GCN5, ADA2, SPT3, SGF29, TAF10, TAF9, SGF11 and SUS1. The SAGA complex is composed of 4 modules, namely the HAT (histone acetyltransferase) module (GCN5, ADA2, NGG1/ADA3 and SGF29), the DUB (deubiquitinating) module (UBP8, SGF11, SGF73 and SUS1), the core or TAF (TBP-associated factor) module (TAF5, TAF6, TAF9, TAF10 and TAF12), and the Tra1 or SPT (Suppressor of Ty) module (TRA1, HFI1/ADA1, SPT3, SPT7, SPT8 and SPT20/ADA5). The Tra1/SPT module binds activators, the core module recruits TBP (TATA-binding protein), the HAT module contains the histone H3 acetyltransferase GCN5, and the DUB module comprises the histone H2B deubiquitinase UBP8. Also identified in an altered form of SAGA, named SALSA (SAGA altered, Spt8 absent) or SLIK (SAGA-like) complex, which contains a C-terminal truncated form of SPT7 and is missing SPT8. However, it has been shown that the SAGA and SAGA-like SALSA/SLIK transcriptional coactivators are structurally and biochemically equivalent. Component of the NuA4 acetyltransferase complex, which consists of the catalytic subunit ESA1 and the 12 non-catalytic subunits ACT1, ARP4, EAF1/VID21, SWC4/EAF2, EAF3, EAF5, EAF6, EAF7, EPL1, TRA1, YAF9 and YNG2. TRA1 is the scaffold subunit for binding to a variety of transcription activators or transcription factors to recruit NuA4 for targeted gene activation. Identified in the Ada.spt complex with NGG1/ADA3 and SPT7.

It is found in the nucleus. Functionally, essential scaffold subunit of the transcription coactivator SAGA complex. SAGA acts as a general cofactor required for essentially all RNA polymerase II transcription. At the promoters, SAGA is required for transcription pre-initiation complex (PIC) recruitment. It influences RNA polymerase II transcriptional activity through different activities such as TBP interaction (via core/TAF module) and promoter selectivity, interaction with transcription activators (via Tra1/SPT module), and chromatin modification through histone acetylation (via HAT module) and deubiquitination (via DUB module). SAGA preferentially acetylates histones H3 (to form H3K9ac, H3K14ac, H3K18ac and H3K23ac) and H2B and deubiquitinates histone H2B. SAGA interacts with DNA via upstream activating sequences (UASs). Also identified in a modified version of SAGA named SALSA or SLIK. The cleavage of SPT7 and the absence of the SPT8 subunit in SLIK neither drive any major conformational differences in its structure compared with SAGA, nor significantly affect HAT, DUB, or DNA-binding activities. Component of the NuA4 histone H4/H2A acetyltransferase involved in transcription and DNA repair. The chain is SAGA complex/NuA4 acetyltransferase complex subunit TRA1 from Saccharomyces cerevisiae (strain ATCC 204508 / S288c) (Baker's yeast).